Consider the following 1546-residue polypeptide: Mediator of RNA polymerase II transcription subunit 14 (1546 aa).

2 short sequence motifs (LXXLL motif) span residues 51-55 (LAELL) and 468-472 (LPSLL). Disordered stretches follow at residues 692 to 717 (KSAT…PSGS), 1000 to 1193 (GRAP…NRPW), and 1512 to 1546 (NPMM…GGPQ). Low complexity-rich tracts occupy residues 693-717 (SATA…PSGS), 1020-1035 (GGPS…GSSP), and 1061-1075 (PSSS…PHPS). The segment covering 1093–1102 (PPAPHMPHPS) has biased composition (pro residues). Positions 1125–1149 (GPNTLYMQSHQDSPFTAMSPANNQW) are enriched in polar residues. Pro residues predominate over residues 1153–1163 (PSMPRPSPRPG). Positions 1515–1527 (MPMQQLQPQVGPQ) are enriched in low complexity.

This sequence belongs to the Mediator complex subunit 14 family. As to quaternary structure, component of the Mediator complex.

The protein resides in the nucleus. Component of the Mediator complex, a coactivator involved in the regulated transcription of nearly all RNA polymerase II-dependent genes. Mediator functions as a bridge to convey information from gene-specific regulatory proteins to the basal RNA polymerase II transcription machinery. Mediator is recruited to promoters by direct interactions with regulatory proteins and serves as a scaffold for the assembly of a functional preinitiation complex with RNA polymerase II and the general transcription factors. The polypeptide is Mediator of RNA polymerase II transcription subunit 14 (MED14) (Drosophila pseudoobscura pseudoobscura (Fruit fly)).